The chain runs to 1436 residues: Antigen WC1.1 (1436 aa).

An N-terminal signal peptide occupies residues 1–25 (MALGRHLSLRGLCVLLLGTMVGGQA). SRCR domains lie at 28-131 (LRLK…VVCS), 134-234 (VRLA…VVCS), and 239-340 (VRLM…VICS). Disulfide bonds link Cys-66–Cys-130 and Cys-97–Cys-107. An N-linked (GlcNAc...) asparagine glycan is attached at Asn-162. 2 disulfide bridges follow: Cys-172/Cys-233 and Cys-203/Cys-213. N-linked (GlcNAc...) asparagine glycans are attached at residues Asn-244 and Asn-256. Intrachain disulfides connect Cys-265/Cys-329, Cys-278/Cys-339, and Cys-309/Cys-319. Residues Asn-351, Asn-424, and Asn-444 are each glycosylated (N-linked (GlcNAc...) asparagine). 5 consecutive SRCR domains span residues 376–476 (LRLV…VICS), 481–581 (LRMV…IWCA), 586–686 (IRLV…VICS), 689–789 (VRLA…VVCS), and 794–895 (VQLM…VICS). 3 cysteine pairs are disulfide-bonded: Cys-401–Cys-465, Cys-414–Cys-475, and Cys-445–Cys-455. 2 N-linked (GlcNAc...) asparagine glycosylation sites follow: Asn-499 and Asn-531. Intrachain disulfides connect Cys-506–Cys-570, Cys-519–Cys-580, Cys-550–Cys-560, Cys-611–Cys-675, Cys-624–Cys-685, and Cys-655–Cys-665. Asn-717 is a glycosylation site (N-linked (GlcNAc...) asparagine). 2 disulfides stabilise this stretch: Cys-727–Cys-788 and Cys-758–Cys-768. Asn-799 is a glycosylation site (N-linked (GlcNAc...) asparagine). Cystine bridges form between Cys-820–Cys-884, Cys-833–Cys-894, and Cys-864–Cys-874. N-linked (GlcNAc...) asparagine glycans are attached at residues Asn-897, Asn-979, and Asn-999. SRCR domains lie at 931–1031 (LRLV…VICS), 1036–1136 (LRMV…ISCE), and 1155–1255 (LRLR…VRCS). 3 cysteine pairs are disulfide-bonded: Cys-956–Cys-1020, Cys-969–Cys-1030, and Cys-1000–Cys-1010. N-linked (GlcNAc...) asparagine glycans are attached at residues Asn-1054 and Asn-1086. 3 disulfides stabilise this stretch: Cys-1061/Cys-1125, Cys-1074/Cys-1135, and Cys-1105/Cys-1115. N-linked (GlcNAc...) asparagine glycosylation is found at Asn-1173 and Asn-1214. 3 disulfide bridges follow: Cys-1180–Cys-1244, Cys-1193–Cys-1254, and Cys-1224–Cys-1234. The disordered stretch occupies residues 1337 to 1410 (EGLGSPDQMT…PGEGEESFWL (74 aa)). Residues 1348-1358 (VPDENYDDAEE) are compositionally biased toward acidic residues. Residues 1384–1393 (RSSQTGSFLN) show a composition bias toward polar residues. Residue Asn-1393 is glycosylated (N-linked (GlcNAc...) asparagine).

As to expression, expressed on subsets of CD4-CD8- gamma delta T lymphocytes.

The protein localises to the secreted. The protein is Antigen WC1.1 of Bos taurus (Bovine).